A 577-amino-acid chain; its full sequence is Probable HECT-type ubiquitin ligase-interacting protein creD (577 aa).

Disordered stretches follow at residues 376-398 (LDPAGYRTPGPGSGPGTPFGTLS) and 428-566 (NLHA…EEER). Polar residues-rich tracts occupy residues 428-447 (NLHASRHSNPSPSESENQLE) and 460-472 (SSGSNTHSLTSPE). Positions 473–486 (LSRRPSDEVDHDHV) are enriched in basic and acidic residues. Residues 528-544 (SPQQAHVRSANRSSSYF) are compositionally biased toward polar residues.

It belongs to the arrestin family. Interacts with hulA.

Its function is as follows. Component of the regulatory network controlling carbon source utilization through ubiquitination and deubiquitination involving creA, creB, creC, creD and acrB. May be involved in signaling by recognizing appropriately phosphorylated substrates via its arrestin domains and then recruit a HECT-type ubiquitin ligase such as hulA, leading to ubiquitination of the substrate, providing a link between ubiquitination and phosphorylation in protein regulation and stability. This is Probable HECT-type ubiquitin ligase-interacting protein creD (creD) from Aspergillus terreus (strain NIH 2624 / FGSC A1156).